The following is a 361-amino-acid chain: Nicotinate-nucleotide--dimethylbenzimidazole phosphoribosyltransferase (361 aa).

Residue Glu315 is the Proton acceptor of the active site.

Belongs to the CobT family.

It catalyses the reaction 5,6-dimethylbenzimidazole + nicotinate beta-D-ribonucleotide = alpha-ribazole 5'-phosphate + nicotinate + H(+). The protein operates within nucleoside biosynthesis; alpha-ribazole biosynthesis; alpha-ribazole from 5,6-dimethylbenzimidazole: step 1/2. Its function is as follows. Catalyzes the synthesis of alpha-ribazole-5'-phosphate from nicotinate mononucleotide (NAMN) and 5,6-dimethylbenzimidazole (DMB). In Clostridium perfringens (strain ATCC 13124 / DSM 756 / JCM 1290 / NCIMB 6125 / NCTC 8237 / Type A), this protein is Nicotinate-nucleotide--dimethylbenzimidazole phosphoribosyltransferase.